The primary structure comprises 129 residues: Defensin-like protein 182 (129 aa).

The N-terminal stretch at 1–26 (METVTSLVFIVNLLIIFTSVVNQARG) is a signal peptide. 8 disulfide bridges follow: cysteine 29–cysteine 70, cysteine 36–cysteine 55, cysteine 39–cysteine 64, cysteine 43–cysteine 66, cysteine 83–cysteine 129, cysteine 94–cysteine 114, cysteine 99–cysteine 123, and cysteine 103–cysteine 125.

It belongs to the DEFL family.

The protein resides in the secreted. Its function is as follows. Confers broad-spectrum resistance to pathogens. This chain is Defensin-like protein 182 (PDF3.2), found in Arabidopsis thaliana (Mouse-ear cress).